The chain runs to 550 residues: Glucose-6-phosphate isomerase (550 aa).

Glu-356 acts as the Proton donor in catalysis. Catalysis depends on residues His-387 and Lys-515.

Belongs to the GPI family.

The protein resides in the cytoplasm. The enzyme catalyses alpha-D-glucose 6-phosphate = beta-D-fructose 6-phosphate. It participates in carbohydrate biosynthesis; gluconeogenesis. Its pathway is carbohydrate degradation; glycolysis; D-glyceraldehyde 3-phosphate and glycerone phosphate from D-glucose: step 2/4. Catalyzes the reversible isomerization of glucose-6-phosphate to fructose-6-phosphate. The chain is Glucose-6-phosphate isomerase from Vibrio campbellii (strain ATCC BAA-1116).